A 196-amino-acid polypeptide reads, in one-letter code: Recombination protein RecR (196 aa).

The C4-type zinc-finger motif lies at 57-72 (CERCNTFTEAPVCSTC). In terms of domain architecture, Toprim spans 80-175 (RQLCVVETPA…SVTRLARGVP (96 aa)).

Belongs to the RecR family.

Functionally, may play a role in DNA repair. It seems to be involved in an RecBC-independent recombinational process of DNA repair. It may act with RecF and RecO. This Methylibium petroleiphilum (strain ATCC BAA-1232 / LMG 22953 / PM1) protein is Recombination protein RecR.